Here is a 500-residue protein sequence, read N- to C-terminus: Glucose-6-phosphate 1-dehydrogenase (500 aa).

NADP(+) contacts are provided by residues 18-25, Arg-52, and Lys-155; that span reads GASGDLSK. D-glucose 6-phosphate is bound by residues Lys-155, 185–189, Glu-223, and Asp-242; that span reads HYLGK. His-247 functions as the Proton acceptor in the catalytic mechanism. Lys-338 is an NADP(+) binding site. Lys-341 lines the D-glucose 6-phosphate pocket. The NADP(+) site is built by Lys-347, Arg-351, and Arg-373. Gln-375 contributes to the D-glucose 6-phosphate binding site. NADP(+) contacts are provided by residues 381-383, 401-403, and Tyr-483; these read YFK and DLT.

This sequence belongs to the glucose-6-phosphate dehydrogenase family.

Its subcellular location is the cytoplasm. The protein localises to the cytosol. It catalyses the reaction D-glucose 6-phosphate + NADP(+) = 6-phospho-D-glucono-1,5-lactone + NADPH + H(+). Its pathway is carbohydrate degradation; pentose phosphate pathway; D-ribulose 5-phosphate from D-glucose 6-phosphate (oxidative stage): step 1/3. Its function is as follows. Catalyzes the rate-limiting step of the oxidative pentose-phosphate pathway, which represents a route for the dissimilation of carbohydrates besides glycolysis. The main function of this enzyme is to provide reducing power (NADPH) and pentose phosphates for fatty acid and nucleic acid synthesis. In Schizosaccharomyces pombe (strain 972 / ATCC 24843) (Fission yeast), this protein is Glucose-6-phosphate 1-dehydrogenase.